Reading from the N-terminus, the 433-residue chain is 5-methylthioadenosine/S-adenosylhomocysteine deaminase (433 aa).

Residues histidine 67 and histidine 69 each contribute to the Zn(2+) site. The substrate site is built by glutamate 96, arginine 148, arginine 158, and histidine 186. Residue histidine 213 participates in Zn(2+) binding. 2 residues coordinate substrate: glutamate 216 and aspartate 301. Aspartate 301 is a binding site for Zn(2+).

This sequence belongs to the metallo-dependent hydrolases superfamily. MTA/SAH deaminase family. The cofactor is Zn(2+).

It carries out the reaction S-adenosyl-L-homocysteine + H2O + H(+) = S-inosyl-L-homocysteine + NH4(+). The catalysed reaction is S-methyl-5'-thioadenosine + H2O + H(+) = S-methyl-5'-thioinosine + NH4(+). In terms of biological role, catalyzes the deamination of 5-methylthioadenosine and S-adenosyl-L-homocysteine into 5-methylthioinosine and S-inosyl-L-homocysteine, respectively. Is also able to deaminate adenosine. This chain is 5-methylthioadenosine/S-adenosylhomocysteine deaminase, found in Pelotomaculum thermopropionicum (strain DSM 13744 / JCM 10971 / SI).